The following is a 331-amino-acid chain: Anthranilate phosphoribosyltransferase (331 aa).

5-phospho-alpha-D-ribose 1-diphosphate is bound by residues Gly79, 82 to 83, Ser87, 89 to 92, 107 to 115, and Ser119; these read GD, NIST, and KHCNSSISG. Gly79 lines the anthranilate pocket. Ser91 provides a ligand contact to Mg(2+). Asn110 serves as a coordination point for anthranilate. Arg165 serves as a coordination point for anthranilate. Residues Asp223 and Glu224 each coordinate Mg(2+).

This sequence belongs to the anthranilate phosphoribosyltransferase family. As to quaternary structure, homodimer. The cofactor is Mg(2+).

The enzyme catalyses N-(5-phospho-beta-D-ribosyl)anthranilate + diphosphate = 5-phospho-alpha-D-ribose 1-diphosphate + anthranilate. It participates in amino-acid biosynthesis; L-tryptophan biosynthesis; L-tryptophan from chorismate: step 2/5. Catalyzes the transfer of the phosphoribosyl group of 5-phosphorylribose-1-pyrophosphate (PRPP) to anthranilate to yield N-(5'-phosphoribosyl)-anthranilate (PRA). The protein is Anthranilate phosphoribosyltransferase of Buchnera aphidicola subsp. Melaphis rhois.